Reading from the N-terminus, the 557-residue chain is Probable protein kinase UbiB (557 aa).

The Protein kinase domain maps to 121-509 (SFDTVPLASA…RKLQTRVVTA (389 aa)). ATP is bound by residues 127 to 135 (LASASIAQV) and K154. D289 serves as the catalytic Proton acceptor. Helical transmembrane passes span 506 to 526 (VVTA…YGLH) and 535 to 555 (VPVW…VAWL).

The protein belongs to the ABC1 family. UbiB subfamily.

It localises to the cell inner membrane. Its pathway is cofactor biosynthesis; ubiquinone biosynthesis [regulation]. In terms of biological role, is probably a protein kinase regulator of UbiI activity which is involved in aerobic coenzyme Q (ubiquinone) biosynthesis. The chain is Probable protein kinase UbiB from Xanthomonas oryzae pv. oryzae (strain MAFF 311018).